A 173-amino-acid chain; its full sequence is Crossover junction endodeoxyribonuclease RuvC (173 aa).

Active-site residues include Asp-8, Glu-67, and Asp-139. Residues Asp-8, Glu-67, and Asp-139 each coordinate Mg(2+).

It belongs to the RuvC family. As to quaternary structure, homodimer which binds Holliday junction (HJ) DNA. The HJ becomes 2-fold symmetrical on binding to RuvC with unstacked arms; it has a different conformation from HJ DNA in complex with RuvA. In the full resolvosome a probable DNA-RuvA(4)-RuvB(12)-RuvC(2) complex forms which resolves the HJ. It depends on Mg(2+) as a cofactor.

The protein resides in the cytoplasm. It carries out the reaction Endonucleolytic cleavage at a junction such as a reciprocal single-stranded crossover between two homologous DNA duplexes (Holliday junction).. Its function is as follows. The RuvA-RuvB-RuvC complex processes Holliday junction (HJ) DNA during genetic recombination and DNA repair. Endonuclease that resolves HJ intermediates. Cleaves cruciform DNA by making single-stranded nicks across the HJ at symmetrical positions within the homologous arms, yielding a 5'-phosphate and a 3'-hydroxyl group; requires a central core of homology in the junction. The consensus cleavage sequence is 5'-(A/T)TT(C/G)-3'. Cleavage occurs on the 3'-side of the TT dinucleotide at the point of strand exchange. HJ branch migration catalyzed by RuvA-RuvB allows RuvC to scan DNA until it finds its consensus sequence, where it cleaves and resolves the cruciform DNA. This Vibrio vulnificus (strain YJ016) protein is Crossover junction endodeoxyribonuclease RuvC.